A 375-amino-acid polypeptide reads, in one-letter code: Trichodiene synthase (375 aa).

The protein belongs to the trichodiene synthase family.

It carries out the reaction (2E,6E)-farnesyl diphosphate = trichodiene + diphosphate. It participates in sesquiterpene biosynthesis; trichothecene biosynthesis. In terms of biological role, TS is a member of the terpene cyclase group of enzymes. It catalyzes the isomerization and cyclization of farnesyl pyro-phosphate to form trichodiene, the first cyclic intermediate in the biosynthetic pathway for trichothecenes. It serves to branch trichothecene biosynthesis from the isoprenoid pathway. This is Trichodiene synthase (TRI5) from Fusarium cortaderiae.